The chain runs to 117 residues: MSAGSSCSQTPSRAIPTRRVALGDGVQLPPGDYSTTPGGTLFSTTPGGTRIIYDRKFLMECRNSPVAKTPPKDLPTIPGVTSPTSDEPPMQASQSHLHSSPEDKRAGGEESQFEMDI.

2 stretches are compositionally biased toward polar residues: residues 1–12 and 33–47; these read MSAGSSCSQTPS and YSTT…TTPG. A disordered region spans residues 1 to 47; it reads MSAGSSCSQTPSRAIPTRRVALGDGVQLPPGDYSTTPGGTLFSTTPG. S2 carries the post-translational modification N-acetylserine. Phosphothreonine is present on residues T36 and T40. Residue S43 is modified to Phosphoserine. T45 carries the post-translational modification Phosphothreonine; by MTOR. T49 bears the Phosphothreonine mark. Phosphotyrosine is present on Y53. The short motif at 53–59 is the YXXXXLphi motif element; sequence YDRKFLM. K56 is covalently cross-linked (Glycyl lysine isopeptide (Lys-Gly) (interchain with G-Cter in ubiquitin)). S64 carries the phosphoserine; by DYRK2, MAPK1, MAPK3 and MTOR modification. Positions 64 to 117 are disordered; sequence SPVAKTPPKDLPTIPGVTSPTSDEPPMQASQSHLHSSPEDKRAGGEESQFEMDI. A Phosphothreonine; by MTOR modification is found at T69. T76 is modified (phosphothreonine). Polar residues predominate over residues 79–98; sequence GVTSPTSDEPPMQASQSHLH. Residues S82, S95, and S99 each carry the phosphoserine modification. A compositionally biased stretch (basic and acidic residues) spans 99–108; it reads SSPEDKRAGG. Position 100 is a phosphoserine; by DYRK2 (S100). The residue at position 111 (S111) is a Phosphoserine. A TOS motif motif is present at residues 113–117; sequence FEMDI.

This sequence belongs to the eIF4E-binding protein family. As to quaternary structure, hypophosphorylated EIF4EBP1 competes with EIF4G1/EIF4G3 to interact with EIF4E; insulin stimulated MAP-kinase (MAPK1 and MAPK3) or mTORC1 phosphorylation of EIF4EBP1 causes dissociation of the complex allowing EIF4G1/EIF4G3 to bind and consequent initiation of translation. Interacts (via TOS motif) with RPTOR; promoting phosphorylation by mTORC1. Post-translationally, phosphorylated on serine and threonine residues in response to insulin, EGF and PDGF. Phosphorylation at Thr-36, Thr-45, Ser-64 and Thr-69, corresponding to the hyperphosphorylated form, is regulated by mTORC1 and abolishes binding to EIF4E. In terms of processing, ubiquitinated: when eIF4E levels are low, hypophosphorylated form is ubiquitinated by the BCR(KLHL25) complex, leading to its degradation and serving as a homeostatic mechanism to maintain translation and prevent eIF4E inhibition when eIF4E levels are low. Not ubiquitinated when hyperphosphorylated (at Thr-36, Thr-45, Ser-64 and Thr-69) or associated with eIF4E. As to expression, expressed in all tissues examined; highest levels in fat and skeletal tissue, lowest levels in kidney.

The protein localises to the cytoplasm. The protein resides in the nucleus. Repressor of translation initiation that regulates EIF4E activity by preventing its assembly into the eIF4F complex: hypophosphorylated form competes with EIF4G1/EIF4G3 and strongly binds to EIF4E, leading to repress translation. In contrast, hyperphosphorylated form dissociates from EIF4E, allowing interaction between EIF4G1/EIF4G3 and EIF4E, leading to initiation of translation. Mediates the regulation of protein translation by hormones, growth factors and other stimuli that signal through the MAP kinase and mTORC1 pathways. The polypeptide is Eukaryotic translation initiation factor 4E-binding protein 1 (Eif4ebp1) (Rattus norvegicus (Rat)).